Consider the following 472-residue polypeptide: GTPase Der (472 aa).

EngA-type G domains follow at residues 3-166 (PVIA…PEQE) and 176-349 (IRIG…DSAM). GTP contacts are provided by residues 9–16 (GRPNVGKS), 56–60 (DTGGI), 118–121 (NKID), 182–189 (GRPNVGKS), 229–233 (DTAGV), and 294–297 (NKWD). In terms of domain architecture, KH-like spans 350–434 (AKWSTNQLTT…PIRFEFRSGE (85 aa)). The segment at 433 to 472 (GENPFAGKKNKLSPRQQKKKERLMKHVKKLKHKQKRKKSR) is disordered. The segment covering 440–472 (KKNKLSPRQQKKKERLMKHVKKLKHKQKRKKSR) has biased composition (basic residues).

This sequence belongs to the TRAFAC class TrmE-Era-EngA-EngB-Septin-like GTPase superfamily. EngA (Der) GTPase family. Associates with the 50S ribosomal subunit.

In terms of biological role, GTPase that plays an essential role in the late steps of ribosome biogenesis. The chain is GTPase Der from Hahella chejuensis (strain KCTC 2396).